The chain runs to 610 residues: Aspartate--tRNA(Asp/Asn) ligase (610 aa).

Glutamate 196 is an L-aspartate binding site. The segment at 220–223 (QIFK) is aspartate. Arginine 242 is an L-aspartate binding site. Residues 242 to 244 (RDE) and glutamine 251 contribute to the ATP site. An L-aspartate-binding site is contributed by histidine 465. An ATP-binding site is contributed by glutamate 499. Arginine 506 contributes to the L-aspartate binding site. Residue 551 to 554 (GMDR) participates in ATP binding.

The protein belongs to the class-II aminoacyl-tRNA synthetase family. Type 1 subfamily. In terms of assembly, homodimer.

The protein resides in the cytoplasm. It carries out the reaction tRNA(Asx) + L-aspartate + ATP = L-aspartyl-tRNA(Asx) + AMP + diphosphate. Aspartyl-tRNA synthetase with relaxed tRNA specificity since it is able to aspartylate not only its cognate tRNA(Asp) but also tRNA(Asn). Reaction proceeds in two steps: L-aspartate is first activated by ATP to form Asp-AMP and then transferred to the acceptor end of tRNA(Asp/Asn). The polypeptide is Aspartate--tRNA(Asp/Asn) ligase (Nitratidesulfovibrio vulgaris (strain ATCC 29579 / DSM 644 / CCUG 34227 / NCIMB 8303 / VKM B-1760 / Hildenborough) (Desulfovibrio vulgaris)).